A 70-amino-acid polypeptide reads, in one-letter code: Small ribosomal subunit protein bS21 (70 aa).

The tract at residues 40–70 (KPTAERKRKHAAAVKRHYKRIRSQQLPPRLY) is disordered. Residues 45–61 (RKRKHAAAVKRHYKRIR) show a composition bias toward basic residues.

This sequence belongs to the bacterial ribosomal protein bS21 family.

This Bordetella parapertussis (strain 12822 / ATCC BAA-587 / NCTC 13253) protein is Small ribosomal subunit protein bS21.